The primary structure comprises 909 residues: MNMHSPNEPDAPEVMTTPQPGTAAVTPMMEQFIEIKAANPDSLLFYRMGDFYELFFDDAEKASRALGIVLTKRGKHQGHDIPMCGVPVHAADDYLQKLIGQGFRVAVCEQIEDPAEAKKRGSKSVVRRDVVRLVTPGTITEDKLLAPSESSFLMALGRVKGGSDHSFAIAWIDISTGAFRVAETTADRLLADIFRVDPRELIVAEPVFHDPELRPVFDVLGRVANPQPPSLFDSASATGRIARFFDVATPDSFGTFSRAELSAISGAIAYVEKTQKAERPPLSRPEREEQGSTLFIDPATRGNLELLRTLSGSREGSLFKAIDRTVTGGGARLLADRLMAPLTDPAAIGARLDSVSFFRTETRLCQAVRASLKSVADMPRALSRLALNRGGPRDLGALRAGFEAAGAIVEIFAATALPQELAEAMAAIRALPQALAQHLIQALGEELPLLKRDGGFLRGGYHPELDEMRALRDESRKVIAGLERSLIEETGIRSLKIRHNNVLGYYIEVTANHHAIMTGSDGAKARFIHRQTMANAMRFTTTELAELETKIANAADRALGIELAAFEALTAQAVGEAEKIRAGADALAAIDVSAALALLSESEAWCRPVVDSSLAFEISGGRHPVVEQALRRSGEGPFVANDCDLSPEGNAKNGAIWLLTGPNMGGKSTFLRQNALIAILAQTGSFVPATSAHIGVVDRLFSRVGASDDLARGRSTFMVEMVETAAILNQAGERALVILDEIGRGTATFDGLSIAWAAVEYLHEKNRCRAIFATHFHEMTSLAGKLARLHNVTMRVKEWEGDVVFLHEVGKGAADRSYGVQVARLAGLPEAVVDRAKQVLHQLEEGEVSGKTNRLVDDLPLFSVAMKREAPKPVKSDALGAALGDINPDEMTPREALEALYRLKGLAGK.

Residues 275–290 show a composition bias toward basic and acidic residues; sequence QKAERPPLSRPEREEQ. Positions 275 to 295 are disordered; that stretch reads QKAERPPLSRPEREEQGSTLF. Residue 661–668 participates in ATP binding; sequence GPNMGGKS.

It belongs to the DNA mismatch repair MutS family.

In terms of biological role, this protein is involved in the repair of mismatches in DNA. It is possible that it carries out the mismatch recognition step. This protein has a weak ATPase activity. The protein is DNA mismatch repair protein MutS of Mesorhizobium japonicum (strain LMG 29417 / CECT 9101 / MAFF 303099) (Mesorhizobium loti (strain MAFF 303099)).